Reading from the N-terminus, the 149-residue chain is UPF0179 protein rrnAC1064 (149 aa).

Belongs to the UPF0179 family.

This is UPF0179 protein rrnAC1064 from Haloarcula marismortui (strain ATCC 43049 / DSM 3752 / JCM 8966 / VKM B-1809) (Halobacterium marismortui).